Here is a 185-residue protein sequence, read N- to C-terminus: Small ribosomal subunit protein uS7 (185 aa).

Belongs to the universal ribosomal protein uS7 family. As to quaternary structure, part of the 30S ribosomal subunit.

One of the primary rRNA binding proteins, it binds directly to 16S rRNA where it nucleates assembly of the head domain of the 30S subunit. Is located at the subunit interface close to the decoding center. In Methanothrix thermoacetophila (strain DSM 6194 / JCM 14653 / NBRC 101360 / PT) (Methanosaeta thermophila), this protein is Small ribosomal subunit protein uS7.